A 388-amino-acid chain; its full sequence is MNLHEYQGKQLFAEYGLPVSKGFAVDTPEQAAEACDKIGGSEWVVKAQVHAGGRGKAGGVKLVRSKEDAKAFAAQWLGKNLVTYQTDANGQPVSKILVESCTDIAKELYLGAVVDRSSRRIVFMASTEGGVDIEKVAHETPEKILKATIDPLVGAQPFQGRELAFQLGLEGKQVQQFAKIFVGLAKLFKDHDLALLEVNPLVIKADGDLHCLDAKINIDANAMYRQPKLKTFHDPSQDDAREAHAAKFELNYVALEGNIGCMVNGAGLAMGTMDIVNLHGGKPANFLDVGGGATKERVTEAFKIILSDSNVAAVLVNIFGGIVRCDMIAEGIIGAVKEVGVKVPVVVRLEGNNAELGAKVLAESGLNIIAATSLTDAAQQVVKAAEGK.

Positions 9 to 244 (KQLFAEYGLP…PSQDDAREAH (236 aa)) constitute an ATP-grasp domain. ATP is bound by residues Lys46, 53-55 (GRG), Glu99, Thr102, and Glu107. 2 residues coordinate Mg(2+): Asn199 and Asp213. Residues Asn264 and 321-323 (GIV) each bind substrate.

Belongs to the succinate/malate CoA ligase beta subunit family. In terms of assembly, heterotetramer of two alpha and two beta subunits. Mg(2+) serves as cofactor.

The enzyme catalyses succinate + ATP + CoA = succinyl-CoA + ADP + phosphate. It carries out the reaction GTP + succinate + CoA = succinyl-CoA + GDP + phosphate. Its pathway is carbohydrate metabolism; tricarboxylic acid cycle; succinate from succinyl-CoA (ligase route): step 1/1. Functionally, succinyl-CoA synthetase functions in the citric acid cycle (TCA), coupling the hydrolysis of succinyl-CoA to the synthesis of either ATP or GTP and thus represents the only step of substrate-level phosphorylation in the TCA. The beta subunit provides nucleotide specificity of the enzyme and binds the substrate succinate, while the binding sites for coenzyme A and phosphate are found in the alpha subunit. The polypeptide is Succinate--CoA ligase [ADP-forming] subunit beta (Pseudomonas entomophila (strain L48)).